The following is an 855-amino-acid chain: MICAL-like protein 1 (855 aa).

A Calponin-homology (CH) domain is found at 2–108 (AGPRGALLAW…YVSQYYNHFT (107 aa)). Disordered regions lie at residues 110-165 (SGQA…SSAC), 226-253 (GRSGTRPLSLQKQQPAAAAEAKDGEDSD), and 269-659 (QASS…HGFP). The span at 124–135 (PAAPSPTSTSPA) shows a compositional bias: low complexity. The LIM zinc-binding domain maps to 163–226 (SACAACGQRV…ERCTRLGLGG (64 aa)). The segment covering 269–278 (QASSEVQPHT) has biased composition (polar residues). 2 positions are modified to phosphoserine: S293 and S307. Residues 308-325 (ESSALTPPTPRPRSSLQQ) show a composition bias toward polar residues. A phosphothreonine mark is found at T313 and T316. The span at 356 to 367 (LSERMTAPRKDP) shows a compositional bias: basic and acidic residues. The NPF1 signature appears at 423 to 425 (NPF). The segment covering 425 to 434 (FEEEEEEEEA) has biased composition (acidic residues). Pro residues predominate over residues 439–449 (VPSPAPAPPET). T461 and T463 each carry phosphothreonine. S464, S465, S478, and S480 each carry phosphoserine. Residues 499-514 (PSPALSVESLSSESSS) show a composition bias toward low complexity. A compositionally biased stretch (polar residues) spans 542 to 554 (PGTSANSVTPSAH). The segment covering 555-570 (SSLSSSGELGQPSGEQ) has biased composition (low complexity). S613 carries the post-translational modification Phosphoserine. Residues 625–627 (NPF) carry the NPF2 motif. Residues 644 to 855 (KGAKPVRPPA…AKSKAPTGKS (212 aa)) form a mediates the interaction with RAB13 and intramolecular interaction with the calponin-homology (CH) domain region. The bMERB domain occupies 663-810 (RKVQADQYIP…EEEEDKMLET (148 aa)). The stretch at 679 to 703 (EMDSIERQLDALEHSGVLLEEKLRG) forms a coiled coil. S682 and S732 each carry phosphoserine. The necessary and sufficient to associate with tubular recycling endosome membranes, mediate phosphatidic acid-binding and membrane tubulation stretch occupies residues 692–855 (HSGVLLEEKL…AKSKAPTGKS (164 aa)). Residues 794-822 (LDEDRQREEEEDKMLETMIKKKDFQREAE) adopt a coiled-coil conformation. Positions 815–826 (KDFQREAESDSK) are enriched in basic and acidic residues. Residues 815–855 (KDFQREAESDSKKKGKFKTMKVLKLLGNKRDAKSKAPTGKS) are disordered.

In terms of assembly, homooligomer. Interacts (via NPF1 motif) with EHD1 (via EH domain); the interaction is direct and probably recruits EHD1 to membranes. Interacts with EHD3 (via EH domain). Interacts with RAB35 (GTP-bound form); the interaction is direct and probably recruits MICALL1 to membranes. Interacts with ACAP2; the interaction is indirect through RAB35. Interacts with RAB8A (GTP-bound form); regulates RAB8A association with recycling endosomes. Interacts with RAB13 (GTP-bound form). Interacts with ARF6 (GTP-bound form). Interacts with PACSIN2 (via the SH3 domain). Interacts with DPYSL2.

The protein resides in the recycling endosome membrane. The protein localises to the late endosome membrane. It is found in the cell projection. Its subcellular location is the cilium membrane. It localises to the cytoplasm. The protein resides in the cytoskeleton. The protein localises to the microtubule organizing center. It is found in the centrosome. Its subcellular location is the centriole. Its function is as follows. Lipid-binding protein with higher affinity for phosphatidic acid, a lipid enriched in recycling endosome membranes. On endosome membranes, acts as a downstream effector of Rab proteins recruiting cytosolic proteins to regulate membrane tubulation. Involved in a late step of receptor-mediated endocytosis regulating for instance endocytosed-EGF receptor trafficking. Alternatively, regulates slow endocytic recycling of endocytosed proteins back to the plasma membrane. Also involved in cargo protein delivery to the plasma membrane. Plays a role in ciliogenesis coordination, recruits EHD1 to primary cilium where it is anchored to the centriole through interaction with tubulins. May indirectly play a role in neurite outgrowth. The sequence is that of MICAL-like protein 1 (Micall1) from Rattus norvegicus (Rat).